Reading from the N-terminus, the 408-residue chain is LL-diaminopimelate aminotransferase (408 aa).

2 residues coordinate substrate: Tyr-15 and Gly-42. Pyridoxal 5'-phosphate contacts are provided by residues Tyr-72, 108–109, Tyr-132, Asn-187, Tyr-218, and 246–248; these read SK and SFS. Residues Lys-109, Tyr-132, and Asn-187 each contribute to the substrate site. Residue Lys-249 is modified to N6-(pyridoxal phosphate)lysine. Residues Arg-257 and Asn-292 each coordinate pyridoxal 5'-phosphate. Substrate contacts are provided by Asn-292 and Arg-388.

Belongs to the class-I pyridoxal-phosphate-dependent aminotransferase family. LL-diaminopimelate aminotransferase subfamily. As to quaternary structure, homodimer. Pyridoxal 5'-phosphate serves as cofactor.

The enzyme catalyses (2S,6S)-2,6-diaminopimelate + 2-oxoglutarate = (S)-2,3,4,5-tetrahydrodipicolinate + L-glutamate + H2O + H(+). Its pathway is amino-acid biosynthesis; L-lysine biosynthesis via DAP pathway; LL-2,6-diaminopimelate from (S)-tetrahydrodipicolinate (aminotransferase route): step 1/1. Functionally, involved in the synthesis of meso-diaminopimelate (m-DAP or DL-DAP), required for both lysine and peptidoglycan biosynthesis. Catalyzes the direct conversion of tetrahydrodipicolinate to LL-diaminopimelate. The polypeptide is LL-diaminopimelate aminotransferase (Prochlorococcus marinus (strain MIT 9211)).